The primary structure comprises 370 residues: Protein FAM110B (370 aa).

2 disordered regions span residues 127–151 (SSEG…RSEA) and 237–256 (KSPE…RPSL). Residues Ser-238 and Ser-301 each carry the phosphoserine modification. Residues 317–337 (DCEQSQDSNSDLRNDDSANDR) are disordered. Basic and acidic residues predominate over residues 326 to 335 (SDLRNDDSAN).

Belongs to the FAM110 family.

The protein localises to the cytoplasm. It localises to the cytoskeleton. It is found in the microtubule organizing center. Its subcellular location is the centrosome. This Pongo abelii (Sumatran orangutan) protein is Protein FAM110B (FAM110B).